The following is an 812-amino-acid chain: DNA gyrase subunit A (812 aa).

Residues 31–496 (IPDVRDGLKP…GNTDFNVEDV (466 aa)) enclose the Topo IIA-type catalytic domain. Catalysis depends on Y119, which acts as the O-(5'-phospho-DNA)-tyrosine intermediate. Positions 523 to 529 (QGRGGKG) match the GyrA-box motif.

The protein belongs to the type II topoisomerase GyrA/ParC subunit family. Heterotetramer, composed of two GyrA and two GyrB chains. In the heterotetramer, GyrA contains the active site tyrosine that forms a transient covalent intermediate with DNA, while GyrB binds cofactors and catalyzes ATP hydrolysis.

The protein localises to the cytoplasm. It carries out the reaction ATP-dependent breakage, passage and rejoining of double-stranded DNA.. Its function is as follows. A type II topoisomerase that negatively supercoils closed circular double-stranded (ds) DNA in an ATP-dependent manner to modulate DNA topology and maintain chromosomes in an underwound state. Negative supercoiling favors strand separation, and DNA replication, transcription, recombination and repair, all of which involve strand separation. Also able to catalyze the interconversion of other topological isomers of dsDNA rings, including catenanes and knotted rings. Type II topoisomerases break and join 2 DNA strands simultaneously in an ATP-dependent manner. The protein is DNA gyrase subunit A of Kosmotoga olearia (strain ATCC BAA-1733 / DSM 21960 / TBF 19.5.1).